Reading from the N-terminus, the 443-residue chain is Xaa-Pro dipeptidase (443 aa).

Residues D246, D257, H339, E384, and E423 each coordinate Mn(2+).

Belongs to the peptidase M24B family. Bacterial-type prolidase subfamily. Requires Mn(2+) as cofactor.

The catalysed reaction is Xaa-L-Pro dipeptide + H2O = an L-alpha-amino acid + L-proline. Splits dipeptides with a prolyl residue in the C-terminal position. In Edwardsiella ictaluri (strain 93-146), this protein is Xaa-Pro dipeptidase.